The following is a 305-amino-acid chain: Maximins-S type B/C (305 aa).

The first 18 residues, 1-18 (MNFNYFILVLFFITSGHA), serve as a signal peptide directing secretion. Propeptides lie at residues 19–35 (KSETREVHQEAENHIKR) and 52–65 (SAEEQNLAEHLVTR). Asn83 carries the post-translational modification Asparagine amide. Positions 87-100 (SAEEQDLAEHLVTR) are excised as a propeptide. Residue Asn118 is modified to Asparagine amide. The propeptide occupies 122–135 (SAEEQDLAEDLVTR). Lys153 is subject to Lysine amide. The propeptide occupies 157 to 170 (SAEDQDLAEDLVTR). Asn188 is subject to Asparagine amide. The propeptide occupies 192 to 205 (SAEEQDLAEHLVTR). At Asn223 the chain carries Asparagine amide. The propeptide occupies 227 to 240 (SAEEQDLSEDLVTR). Position 258 is an asparagine amide (Asn258). The propeptide occupies 262–275 (SAEEQDLVEDLVTR). Position 293 is a lysine amide (Lys293). Residues 297-305 (SAEQEKDMK) constitute a propeptide that is removed on maturation.

The protein belongs to the maximin-S family. Expressed by the skin dorsal glands.

It localises to the secreted. Functionally, maximin-S1 has no antimicrobial activity. Has no hemolytic activity. Maximin-S2 has an activity against mycoplasma but has no activity against common Gram-positive and Gram-negative bacteria nor fungi. Has no hemolytic activity. Its function is as follows. Maximin-S3 has an activity against mycoplasma but has no activity against common Gram-positive and Gram-negative bacteria nor fungi. Has no hemolytic activity. In terms of biological role, maximin-S4 has an activity against mycoplasma but has no activity against common Gram-positive and Gram-negative bacteria nor fungi. Has no hemolytic activity. Functionally, maximin-S5 has an activity against mycoplasma but has no activity against common Gram-positive and Gram-negative bacteria nor fungi. Has no hemolytic activity. This Bombina maxima (Giant fire-bellied toad) protein is Maximins-S type B/C.